The following is a 588-amino-acid chain: Adenine deaminase (588 aa).

The protein belongs to the metallo-dependent hydrolases superfamily. Adenine deaminase family. In terms of assembly, homodimer. Mn(2+) serves as cofactor.

The catalysed reaction is adenine + H2O + H(+) = hypoxanthine + NH4(+). The polypeptide is Adenine deaminase (Shigella flexneri serotype 5b (strain 8401)).